An 85-amino-acid polypeptide reads, in one-letter code: Putative septation protein SpoVG (85 aa).

It belongs to the SpoVG family.

Could be involved in septation. This is Putative septation protein SpoVG from Archaeoglobus fulgidus (strain ATCC 49558 / DSM 4304 / JCM 9628 / NBRC 100126 / VC-16).